The primary structure comprises 216 residues: Flagellar transcriptional regulator FlhC (216 aa).

Zn(2+) contacts are provided by Cys137, Cys140, Cys157, and Cys160.

Belongs to the FlhC family. Heterohexamer composed of two FlhC and four FlhD subunits. Each FlhC binds a FlhD dimer, forming a heterotrimer, and a hexamer assembles by dimerization of two heterotrimers. Zn(2+) is required as a cofactor.

The protein localises to the cytoplasm. Functions in complex with FlhD as a master transcriptional regulator that regulates transcription of several flagellar and non-flagellar operons by binding to their promoter region. Activates expression of class 2 flagellar genes, including fliA, which is a flagellum-specific sigma factor that turns on the class 3 genes. Also regulates genes whose products function in a variety of physiological pathways. This Paraburkholderia atlantica protein is Flagellar transcriptional regulator FlhC.